Here is a 259-residue protein sequence, read N- to C-terminus: MIVDISCNITDSQFKNVEDTILKCKEAKVIPIFVGVDYTTSLKSCNYAEKFDTLFYAGIHPLYSENSVYIPVNSDRCIAIGECGLDYYRLQFSSIETQKRIFKVQLDLKAERYFLHCRDSHRDFMEILSDYNFKGVVHSFTGTVEESKEIIKKGLFIGINGCSLKNEEGIEVVKNLPLNSILVETDSPYCKIRKSYAGYKFVNNYQKHKSNEPYLIYEIIEAIANIKNIPINILLDTLLSNNINFYGERLVECFEKWRL.

The a divalent metal cation site is built by Glu82, His116, His138, and Asp186.

Belongs to the metallo-dependent hydrolases superfamily. TatD-type hydrolase family. It depends on a divalent metal cation as a cofactor.

The protein localises to the nucleus. Functionally, putative deoxyribonuclease. In Vairimorpha ceranae (strain BRL01) (Microsporidian parasite), this protein is Putative deoxyribonuclease TATDN1 homolog.